A 217-amino-acid chain; its full sequence is MSCAGAAAAPRLWRLRPGARRSLSAYGRRTSVRFRSSGMTLDNISRAAVDRIIRVDHAGEYGANRIYAGQMAVLGRTSVGPVIQKMWDQEKDHLKKFNELMVTFRVRPTVLMPLWNVLGFALGAGTALLGKEGAMACTVAVEESIAHHYNNQIRTLMEEDPEKYEELLQLIKKFRDEELEHHDIGLDHDAELAPAYAVLKSIIQAGCRVAIYLSERL.

The transit peptide at 1–35 (MSCAGAAAAPRLWRLRPGARRSLSAYGRRTSVRFR) directs the protein to the mitochondrion. The required for nuclear localization stretch occupies residues 11 to 29 (RLWRLRPGARRSLSAYGRR). 2 repeat units span residues 48 to 129 (AVDR…TALL) and 130 to 217 (GKEG…SERL). Residues 48–217 (AVDRIIRVDH…RVAIYLSERL (170 aa)) form a 2 X approximate tandem repeats region. Position 51 (arginine 51) interacts with NADH. Residues glutamate 60, glutamate 90, histidine 93, glutamate 142, glutamate 178, and histidine 181 each contribute to the Fe cation site. NADH contacts are provided by tyrosine 212 and arginine 216.

Belongs to the COQ7 family. As to quaternary structure, component of a multi-subunit COQ enzyme complex. Interacts with COQ8B and COQ6. Interacts with COQ9. The cofactor is Fe cation. Expressed dominantly in heart and skeletal muscle.

The protein localises to the mitochondrion inner membrane. It is found in the mitochondrion. The protein resides in the nucleus. It localises to the chromosome. It carries out the reaction a 5-methoxy-2-methyl-3-(all-trans-polyprenyl)benzoquinone + NADH + O2 = a 3-demethylubiquinone + NAD(+) + H2O. It participates in cofactor biosynthesis; ubiquinone biosynthesis. In terms of biological role, catalyzes the hydroxylation of the 5-methoxy-2-methyl-3-(all-trans-polyprenyl)benzoquinone at the C6 position and participates in the biosynthesis of ubiquinone. Catalyzes the reaction through a substrate-mediated reduction pathway, whereby NADH shuttles electrons to 5-methoxy-2-methyl-3-(all-trans-decaprenyl)benzoquinone, which then transfers the electrons to the two Fe(3+) centers. The binding of 5-methoxy-2-methyl-3-(all-trans-polyprenyl)benzoquinone (DMQn) mediates reduction of the diiron center by nicotinamide adenine dinucleotide (NADH) and initiates oxygen activation for subsequent DMQ hydroxylation. The physiological substrates are 5-methoxy-2-methyl-3-(all-trans-nonaprenyl)benzoquinone (DMQ(9)) and 5-methoxy-2-methyl-3-(all-trans-decaprenyl)benzoquinone (DMQ(10)), however in vitro the enzyme does not have any specificity concerning the length of the polyprenyl tail, and accepts tails of various lengths with similar efficiency. Also has a structural role in the COQ enzyme complex, stabilizing other COQ polypeptides. Involved in lifespan determination in a ubiquinone-independent manner. Plays a role in modulating mitochondrial stress responses, acting in the nucleus, perhaps via regulating gene expression, independent of its characterized mitochondrial function in ubiquinone biosynthesis. The sequence is that of NADPH-dependent 3-demethoxyubiquinone 3-hydroxylase, mitochondrial from Homo sapiens (Human).